A 158-amino-acid chain; its full sequence is Phosphopantetheine adenylyltransferase (158 aa).

Position 10 (threonine 10) interacts with substrate. Residues threonine 10–phenylalanine 11 and histidine 18 each bind ATP. Lysine 42, leucine 74, and arginine 88 together coordinate substrate. Residues glycine 89–arginine 91, glutamate 99, and tyrosine 124–serine 130 contribute to the ATP site.

The protein belongs to the bacterial CoaD family. Homohexamer. The cofactor is Mg(2+).

The protein localises to the cytoplasm. The catalysed reaction is (R)-4'-phosphopantetheine + ATP + H(+) = 3'-dephospho-CoA + diphosphate. Its pathway is cofactor biosynthesis; coenzyme A biosynthesis; CoA from (R)-pantothenate: step 4/5. Its function is as follows. Reversibly transfers an adenylyl group from ATP to 4'-phosphopantetheine, yielding dephospho-CoA (dPCoA) and pyrophosphate. This Erwinia tasmaniensis (strain DSM 17950 / CFBP 7177 / CIP 109463 / NCPPB 4357 / Et1/99) protein is Phosphopantetheine adenylyltransferase.